The sequence spans 258 residues: uncharacterized protein (258 aa).

Polar residues predominate over residues alanine 40–valine 54. Positions alanine 40–glutamate 63 are disordered.

This is an uncharacterized protein from Treponema pallidum (strain Nichols).